The chain runs to 334 residues: MDGVIVYCLNALVKHGEEINHIKNDFMIKPCCERVCEKVKNVHIDGQSKNNTVIADLPYLDNAVLDVCKSVYKKNVSRISRFANLIKIDDDDKTPTGVYNYFKPKDAISVIISIGKDKDVCELLIASDKACACIELNSYKVAILPMNVSFFTKGNASLIILLFDFSINAAPLLRSVTDNNVVISRHKRLHGEIPSSNWFKFYISIKSNYCSILYMVVDGSVMYAIADNKTHTIISKNILDNTTINDECRCCYFEPQIKILDRDEMLNGSSCDMNRHCIMMNLPDIGEFGSSILGKYEPDMIKIALSVAGNLIRNQDYIPGRRGYSYYVYGIASR.

It belongs to the orthopoxvirus OPG181 family.

The sequence is that of Protein OPG181 (OPG181) from Homo sapiens (Human).